The primary structure comprises 485 residues: Probable glycine dehydrogenase (decarboxylating) subunit 2 (485 aa).

The residue at position 273 (Lys273) is an N6-(pyridoxal phosphate)lysine.

It belongs to the GcvP family. C-terminal subunit subfamily. In terms of assembly, the glycine cleavage system is composed of four proteins: P, T, L and H. In this organism, the P 'protein' is a heterodimer of two subunits. Pyridoxal 5'-phosphate is required as a cofactor.

It carries out the reaction N(6)-[(R)-lipoyl]-L-lysyl-[glycine-cleavage complex H protein] + glycine + H(+) = N(6)-[(R)-S(8)-aminomethyldihydrolipoyl]-L-lysyl-[glycine-cleavage complex H protein] + CO2. Functionally, the glycine cleavage system catalyzes the degradation of glycine. The P protein binds the alpha-amino group of glycine through its pyridoxal phosphate cofactor; CO(2) is released and the remaining methylamine moiety is then transferred to the lipoamide cofactor of the H protein. The sequence is that of Probable glycine dehydrogenase (decarboxylating) subunit 2 from Bacillus licheniformis (strain ATCC 14580 / DSM 13 / JCM 2505 / CCUG 7422 / NBRC 12200 / NCIMB 9375 / NCTC 10341 / NRRL NRS-1264 / Gibson 46).